The sequence spans 160 residues: SsrA-binding protein (160 aa).

The span at 138–148 shows a compositional bias: basic and acidic residues; sequence KRDDIKDREWQ. The disordered stretch occupies residues 138–160; that stretch reads KRDDIKDREWQTAKSRIMKHANR.

Belongs to the SmpB family.

Its subcellular location is the cytoplasm. Its function is as follows. Required for rescue of stalled ribosomes mediated by trans-translation. Binds to transfer-messenger RNA (tmRNA), required for stable association of tmRNA with ribosomes. tmRNA and SmpB together mimic tRNA shape, replacing the anticodon stem-loop with SmpB. tmRNA is encoded by the ssrA gene; the 2 termini fold to resemble tRNA(Ala) and it encodes a 'tag peptide', a short internal open reading frame. During trans-translation Ala-aminoacylated tmRNA acts like a tRNA, entering the A-site of stalled ribosomes, displacing the stalled mRNA. The ribosome then switches to translate the ORF on the tmRNA; the nascent peptide is terminated with the 'tag peptide' encoded by the tmRNA and targeted for degradation. The ribosome is freed to recommence translation, which seems to be the essential function of trans-translation. This Serratia proteamaculans (strain 568) protein is SsrA-binding protein.